The following is a 205-amino-acid chain: Ribosomal RNA small subunit methyltransferase G (205 aa).

S-adenosyl-L-methionine-binding positions include G71, F76, 120 to 121, and R134; that span reads IE.

The protein belongs to the methyltransferase superfamily. RNA methyltransferase RsmG family.

It is found in the cytoplasm. It carries out the reaction guanosine(527) in 16S rRNA + S-adenosyl-L-methionine = N(7)-methylguanosine(527) in 16S rRNA + S-adenosyl-L-homocysteine. Functionally, specifically methylates the N7 position of guanine in position 527 of 16S rRNA. In Paramagnetospirillum magneticum (strain ATCC 700264 / AMB-1) (Magnetospirillum magneticum), this protein is Ribosomal RNA small subunit methyltransferase G.